The primary structure comprises 249 residues: Exosome complex component Rrp41 (249 aa).

Belongs to the RNase PH family. Rrp41 subfamily. In terms of assembly, component of the archaeal exosome complex. Forms a hexameric ring-like arrangement composed of 3 Rrp41-Rrp42 heterodimers. The hexameric ring associates with a trimer of Rrp4 and/or Csl4 subunits.

The protein localises to the cytoplasm. Its function is as follows. Catalytic component of the exosome, which is a complex involved in RNA degradation. Has 3'-&gt;5' exoribonuclease activity. Can also synthesize heteromeric RNA-tails. This Pyrococcus horikoshii (strain ATCC 700860 / DSM 12428 / JCM 9974 / NBRC 100139 / OT-3) protein is Exosome complex component Rrp41.